The sequence spans 124 residues: Fluoride-specific ion channel FluC (124 aa).

The next 4 helical transmembrane spans lie at 5–25 (VYIA…SGFV), 32–52 (SFPY…GLIM), 67–87 (FAIT…SFET), and 96–116 (LLIA…CTWI). Na(+)-binding residues include Gly75 and Thr78.

It belongs to the fluoride channel Fluc/FEX (TC 1.A.43) family.

The protein localises to the cell inner membrane. The enzyme catalyses fluoride(in) = fluoride(out). Na(+) is not transported, but it plays an essential structural role and its presence is essential for fluoride channel function. Fluoride-specific ion channel. Important for reducing fluoride concentration in the cell, thus reducing its toxicity. The polypeptide is Fluoride-specific ion channel FluC (Citrifermentans bemidjiense (strain ATCC BAA-1014 / DSM 16622 / JCM 12645 / Bem) (Geobacter bemidjiensis)).